A 110-amino-acid polypeptide reads, in one-letter code: Putative anti-sigma factor antagonist TM_1442 (110 aa).

Residues 4 to 110 (LKLDIVEQDD…FKITDTVEEA (107 aa)) enclose the STAS domain. Ser59 carries the phosphoserine modification.

It belongs to the anti-sigma-factor antagonist family. In terms of processing, phosphorylated on a serine residue.

Functionally, in the phosphorylated form it could act as an anti-anti-sigma factor that counteracts an anti-sigma factor and thus releases a sigma factor from inhibition. The chain is Putative anti-sigma factor antagonist TM_1442 from Thermotoga maritima (strain ATCC 43589 / DSM 3109 / JCM 10099 / NBRC 100826 / MSB8).